Consider the following 150-residue polypeptide: Phosphopantetheine adenylyltransferase (150 aa).

Threonine 9 serves as a coordination point for substrate. ATP-binding positions include 9-10 (TF) and histidine 17. Residues lysine 41, threonine 73, and arginine 87 each contribute to the substrate site. ATP-binding positions include 88–90 (GIR), glutamate 98, and 122–128 (LTCVSST).

This sequence belongs to the bacterial CoaD family. As to quaternary structure, homohexamer. Requires Mg(2+) as cofactor.

It localises to the cytoplasm. It catalyses the reaction (R)-4'-phosphopantetheine + ATP + H(+) = 3'-dephospho-CoA + diphosphate. It functions in the pathway cofactor biosynthesis; coenzyme A biosynthesis; CoA from (R)-pantothenate: step 4/5. Its function is as follows. Reversibly transfers an adenylyl group from ATP to 4'-phosphopantetheine, yielding dephospho-CoA (dPCoA) and pyrophosphate. The polypeptide is Phosphopantetheine adenylyltransferase (Bacteroides fragilis (strain ATCC 25285 / DSM 2151 / CCUG 4856 / JCM 11019 / LMG 10263 / NCTC 9343 / Onslow / VPI 2553 / EN-2)).